Here is a 403-residue protein sequence, read N- to C-terminus: Coenzyme A biosynthesis bifunctional protein CoaBC (403 aa).

A phosphopantothenoylcysteine decarboxylase region spans residues 1–197 (MLHHVKLIYA…LHPKSLEGKR (197 aa)). The phosphopantothenate--cysteine ligase stretch occupies residues 198-403 (VLVTAGATRE…RLWDEIEKML (206 aa)). Positions 287, 297, and 330 each coordinate CTP.

The protein in the N-terminal section; belongs to the HFCD (homo-oligomeric flavin containing Cys decarboxylase) superfamily. This sequence in the C-terminal section; belongs to the PPC synthetase family. Requires Mg(2+) as cofactor. FMN is required as a cofactor.

It carries out the reaction N-[(R)-4-phosphopantothenoyl]-L-cysteine + H(+) = (R)-4'-phosphopantetheine + CO2. It catalyses the reaction (R)-4'-phosphopantothenate + L-cysteine + CTP = N-[(R)-4-phosphopantothenoyl]-L-cysteine + CMP + diphosphate + H(+). Its pathway is cofactor biosynthesis; coenzyme A biosynthesis. Functionally, catalyzes two sequential steps in the biosynthesis of coenzyme A. In the first step cysteine is conjugated to 4'-phosphopantothenate to form 4-phosphopantothenoylcysteine. In the second step the latter compound is decarboxylated to form 4'-phosphopantotheine. The sequence is that of Coenzyme A biosynthesis bifunctional protein CoaBC from Thermococcus kodakarensis (strain ATCC BAA-918 / JCM 12380 / KOD1) (Pyrococcus kodakaraensis (strain KOD1)).